An 84-amino-acid polypeptide reads, in one-letter code: Cell division topological specificity factor (84 aa).

The protein belongs to the MinE family.

Its function is as follows. Prevents the cell division inhibition by proteins MinC and MinD at internal division sites while permitting inhibition at polar sites. This ensures cell division at the proper site by restricting the formation of a division septum at the midpoint of the long axis of the cell. The protein is Cell division topological specificity factor of Pseudomonas aeruginosa (strain LESB58).